A 521-amino-acid chain; its full sequence is D-aminoacyl-tRNA deacylase (521 aa).

2 disordered regions span residues A323 to S353 and V499 to S521. Basic and acidic residues predominate over residues V343–S353. The span at S501–S521 shows a compositional bias: low complexity.

This sequence belongs to the DtdA deacylase family. Monomer. It depends on Zn(2+) as a cofactor.

It carries out the reaction a D-aminoacyl-tRNA + H2O = a tRNA + a D-alpha-amino acid + H(+). The catalysed reaction is glycyl-tRNA(Ala) + H2O = tRNA(Ala) + glycine + H(+). In terms of biological role, D-aminoacyl-tRNA deacylase with broad substrate specificity. By recycling D-aminoacyl-tRNA to D-amino acids and free tRNA molecules, this enzyme counteracts the toxicity associated with the formation of D-aminoacyl-tRNA entities in vivo. The protein is D-aminoacyl-tRNA deacylase of Haloquadratum walsbyi (strain DSM 16790 / HBSQ001).